The following is a 482-amino-acid chain: BEL1-like homeodomain protein 7 (482 aa).

An SR/KY domain region spans residues 118-134 (SKYLKAAQELLDETVNV). The interval 167–238 (ERQELQSKLS…CLRDAISGQI (72 aa)) is BELL domain. A DNA-binding region (homeobox) is located at residues 285 to 347 (TWRPQRGLPD…NARVRLWKPM (63 aa)). The segment at 358 to 401 (DALQENDPNQSSENTPEITEIQELQTESSSNNGHVPGVASSSMR) is disordered. Residues 363 to 401 (NDPNQSSENTPEITEIQELQTESSSNNGHVPGVASSSMR) show a composition bias toward polar residues.

Belongs to the TALE/BELL homeobox family. May form heterodimeric complexes with TALE/KNOX proteins.

The protein resides in the nucleus. The sequence is that of BEL1-like homeodomain protein 7 (BLH7) from Arabidopsis thaliana (Mouse-ear cress).